The following is a 641-amino-acid chain: Macrolide export ATP-binding/permease protein MacB (641 aa).

Residues 2 to 240 (IKLENIKKSF…LKQNLKEIKP (239 aa)) form the ABC transporter domain. Residue 38–45 (GQSGSGKS) coordinates ATP. 4 helical membrane-spanning segments follow: residues 268–288 (FLTMLGIIIGIASVICVVALA), 516–536 (LLISGIALISLMVGGIGVMNI), 565–585 (FLIEAILLCAIGGSIGIGLAY), and 601–621 (IFSTASIFIALGVSSLIGIVF).

It belongs to the ABC transporter superfamily. Macrolide exporter (TC 3.A.1.122) family. As to quaternary structure, homodimer.

It localises to the cell inner membrane. Functionally, non-canonical ABC transporter that contains transmembrane domains (TMD), which form a pore in the inner membrane, and an ATP-binding domain (NBD), which is responsible for energy generation. Confers resistance against macrolides. The protein is Macrolide export ATP-binding/permease protein MacB of Campylobacter fetus subsp. fetus (strain 82-40).